The sequence spans 237 residues: Sugar fermentation stimulation protein homolog (237 aa).

The protein belongs to the SfsA family.

This chain is Sugar fermentation stimulation protein homolog, found in Pseudomonas fluorescens (strain Pf0-1).